The sequence spans 293 residues: Cytidine deaminase 8 (293 aa).

CMP/dCMP-type deaminase domains lie at 20–151 and 181–293; these read FTPQ…LISQ and EHCN…LHCK. 61–63 provides a ligand contact to substrate; sequence NVE. A Zn(2+)-binding site is contributed by histidine 74. Glutamate 76 serves as the catalytic Proton donor. 2 residues coordinate Zn(2+): cysteine 107 and cysteine 110.

This sequence belongs to the cytidine and deoxycytidylate deaminase family. Homodimer. It depends on Zn(2+) as a cofactor.

The catalysed reaction is cytidine + H2O + H(+) = uridine + NH4(+). It carries out the reaction 2'-deoxycytidine + H2O + H(+) = 2'-deoxyuridine + NH4(+). This enzyme scavenges exogenous and endogenous cytidine and 2'-deoxycytidine for UMP synthesis. The protein is Cytidine deaminase 8 (CDA8) of Arabidopsis thaliana (Mouse-ear cress).